Reading from the N-terminus, the 488-residue chain is Glutamyl-tRNA(Gln) amidotransferase subunit A (488 aa).

Active-site charge relay system residues include lysine 80 and serine 155. Residue serine 179 is the Acyl-ester intermediate of the active site.

The protein belongs to the amidase family. GatA subfamily. As to quaternary structure, heterotrimer of A, B and C subunits.

It catalyses the reaction L-glutamyl-tRNA(Gln) + L-glutamine + ATP + H2O = L-glutaminyl-tRNA(Gln) + L-glutamate + ADP + phosphate + H(+). Its function is as follows. Allows the formation of correctly charged Gln-tRNA(Gln) through the transamidation of misacylated Glu-tRNA(Gln) in organisms which lack glutaminyl-tRNA synthetase. The reaction takes place in the presence of glutamine and ATP through an activated gamma-phospho-Glu-tRNA(Gln). The polypeptide is Glutamyl-tRNA(Gln) amidotransferase subunit A (Chloroflexus aggregans (strain MD-66 / DSM 9485)).